The sequence spans 1420 residues: DNA-directed RNA polymerase subunit beta' (1420 aa).

Residues Cys-71, Cys-73, Cys-86, and Cys-89 each contribute to the Zn(2+) site. Residues Asp-461, Asp-463, and Asp-465 each contribute to the Mg(2+) site. Zn(2+) is bound by residues Cys-815, Cys-889, Cys-896, and Cys-899.

It belongs to the RNA polymerase beta' chain family. As to quaternary structure, the RNAP catalytic core consists of 2 alpha, 1 beta, 1 beta' and 1 omega subunit. When a sigma factor is associated with the core the holoenzyme is formed, which can initiate transcription. Mg(2+) serves as cofactor. Zn(2+) is required as a cofactor.

It catalyses the reaction RNA(n) + a ribonucleoside 5'-triphosphate = RNA(n+1) + diphosphate. Functionally, DNA-dependent RNA polymerase catalyzes the transcription of DNA into RNA using the four ribonucleoside triphosphates as substrates. The polypeptide is DNA-directed RNA polymerase subunit beta' (Histophilus somni (strain 129Pt) (Haemophilus somnus)).